The primary structure comprises 950 residues: Serine/threonine-protein kinase 10-A (950 aa).

Residues 36 to 294 form the Protein kinase domain; sequence WEIIGELGDG…AAQLLEHPFV (259 aa). ATP contacts are provided by residues 42–50 and Lys-65; that span reads LGDGAFGKV. Residue Asp-157 is the Proton acceptor of the active site. Over residues 319–331 the composition is skewed to acidic residues; sequence EEQGEAEEEEDSD. Residues 319–478 are disordered; the sequence is EEQGEAEEEE…DSGSNSASES (160 aa). The segment covering 347-356 has biased composition (basic and acidic residues); it reads EIGKDIEREQ. Over residues 365-382 the composition is skewed to polar residues; that stretch reads SATSPQKTDSQADNYSQR. Residues 416–432 are compositionally biased toward basic and acidic residues; the sequence is EPKRNSTAESYRGEEHS. Residues 433–445 are compositionally biased toward low complexity; sequence SASSQRQRSAQSA. Residues 452 to 463 are compositionally biased toward polar residues; that stretch reads SFDSPTRYFTNW. Ser-482, Ser-486, and Ser-490 each carry phosphoserine; by PLK1. Residues 634 to 786 adopt a coiled-coil conformation; that stretch reads IKFLEQLKLR…QLRLRQQQEK (153 aa).

It belongs to the protein kinase superfamily. STE Ser/Thr protein kinase family. STE20 subfamily. As to quaternary structure, homodimer. In terms of processing, autophosphorylates. Phosphorylated by plk1/plx1, suggesting the existence of a feedback loop with plk1/plx1. activation of the protein.

Its subcellular location is the cell membrane. The catalysed reaction is L-seryl-[protein] + ATP = O-phospho-L-seryl-[protein] + ADP + H(+). The enzyme catalyses L-threonyl-[protein] + ATP = O-phospho-L-threonyl-[protein] + ADP + H(+). Functionally, may act as a polo kinase kinase by mediating phosphorylation of plk1/plx1 and subsequent activation of plk1/plx1 during oocyte maturation. This Xenopus laevis (African clawed frog) protein is Serine/threonine-protein kinase 10-A (stk10-a).